The following is a 602-amino-acid chain: Threonine--tRNA ligase (602 aa).

The segment at 208 to 499 (DHRKLGTELK…LTEHCAGEFP (292 aa)) is catalytic. Zn(2+) contacts are provided by cysteine 300, histidine 351, and histidine 476.

This sequence belongs to the class-II aminoacyl-tRNA synthetase family. Homodimer. Zn(2+) is required as a cofactor.

It localises to the cytoplasm. It carries out the reaction tRNA(Thr) + L-threonine + ATP = L-threonyl-tRNA(Thr) + AMP + diphosphate + H(+). Catalyzes the attachment of threonine to tRNA(Thr) in a two-step reaction: L-threonine is first activated by ATP to form Thr-AMP and then transferred to the acceptor end of tRNA(Thr). Also edits incorrectly charged L-seryl-tRNA(Thr). This chain is Threonine--tRNA ligase, found in Campylobacter jejuni (strain RM1221).